A 201-amino-acid chain; its full sequence is Recombination protein RecR (201 aa).

The C4-type zinc finger occupies 60 to 75; that stretch reads CHACGNVDTSDPCTIC. Positions 83-178 constitute a Toprim domain; sequence TTLVVVEDVS…TITRLAHGVP (96 aa).

The protein belongs to the RecR family.

May play a role in DNA repair. It seems to be involved in an RecBC-independent recombinational process of DNA repair. It may act with RecF and RecO. The protein is Recombination protein RecR of Methylorubrum populi (strain ATCC BAA-705 / NCIMB 13946 / BJ001) (Methylobacterium populi).